The following is a 142-amino-acid chain: Hemoglobin subunit zeta (142 aa).

Serine 2 is modified (N-acetylserine). The region spanning 2 to 142 is the Globin domain; it reads SLTRTERTII…VSGVLTEKYR (141 aa). Threonine 29 is subject to Phosphothreonine. Serine 53 carries the post-translational modification Phosphoserine. A heme b-binding site is contributed by histidine 59. Phosphoserine is present on residues serine 73 and serine 82. Histidine 88 provides a ligand contact to heme b.

Belongs to the globin family. Heterotetramer of two zeta chains and beta-type chains.

Functionally, the zeta chain is an alpha-type chain of mammalian embryonic hemoglobin. The chain is Hemoglobin subunit zeta (HBZ1) from Capra hircus (Goat).